The primary structure comprises 64 residues: Large ribosomal subunit protein uL30 (64 aa).

This sequence belongs to the universal ribosomal protein uL30 family. As to quaternary structure, part of the 50S ribosomal subunit.

This is Large ribosomal subunit protein uL30 from Beijerinckia indica subsp. indica (strain ATCC 9039 / DSM 1715 / NCIMB 8712).